We begin with the raw amino-acid sequence, 184 residues long: Ribosome-recycling factor (184 aa).

It belongs to the RRF family.

It is found in the cytoplasm. Its function is as follows. Responsible for the release of ribosomes from messenger RNA at the termination of protein biosynthesis. May increase the efficiency of translation by recycling ribosomes from one round of translation to another. This Borrelia garinii subsp. bavariensis (strain ATCC BAA-2496 / DSM 23469 / PBi) (Borreliella bavariensis) protein is Ribosome-recycling factor.